Here is a 352-residue protein sequence, read N- to C-terminus: Photosystem II protein D1 (352 aa).

Thr2 is modified (N-acetylthreonine). Thr2 carries the phosphothreonine modification. Helical transmembrane passes span 29 to 46 (YIGW…TATS), 118 to 133 (HFLL…EWEL), and 142 to 156 (WIAV…AATA). His118 contacts chlorophyll a. Tyr126 lines the pheophytin a pocket. [CaMn4O5] cluster-binding residues include Asp170 and Glu189. Residues 197-218 (FHMLGVAGVFGGSLFSAMHGSL) form a helical membrane-spanning segment. His198 contacts chlorophyll a. Residues His215 and 264-265 (SF) each bind a quinone. Fe cation is bound at residue His215. His272 lines the Fe cation pocket. The helical transmembrane segment at 274–288 (FLAAWPVVGIWFTAL) threads the bilayer. 4 residues coordinate [CaMn4O5] cluster: His332, Glu333, Asp342, and Ala344. The propeptide occupies 345-352 (SVEAPVVG).

The protein belongs to the reaction center PufL/M/PsbA/D family. PSII is composed of 1 copy each of membrane proteins PsbA, PsbB, PsbC, PsbD, PsbE, PsbF, PsbH, PsbI, PsbJ, PsbK, PsbL, PsbM, PsbT, PsbX, PsbY, PsbZ, Psb30/Ycf12, at least 3 peripheral proteins of the oxygen-evolving complex and a large number of cofactors. It forms dimeric complexes. The D1/D2 heterodimer binds P680, chlorophylls that are the primary electron donor of PSII, and subsequent electron acceptors. It shares a non-heme iron and each subunit binds pheophytin, quinone, additional chlorophylls, carotenoids and lipids. D1 provides most of the ligands for the Mn4-Ca-O5 cluster of the oxygen-evolving complex (OEC). There is also a Cl(-1) ion associated with D1 and D2, which is required for oxygen evolution. The PSII complex binds additional chlorophylls, carotenoids and specific lipids. serves as cofactor. Post-translationally, tyr-161 forms a radical intermediate that is referred to as redox-active TyrZ, YZ or Y-Z. In terms of processing, C-terminally processed by CTPA; processing is essential to allow assembly of the oxygen-evolving complex and thus photosynthetic growth.

The protein resides in the plastid. It is found in the chloroplast thylakoid membrane. It carries out the reaction 2 a plastoquinone + 4 hnu + 2 H2O = 2 a plastoquinol + O2. In terms of biological role, photosystem II (PSII) is a light-driven water:plastoquinone oxidoreductase that uses light energy to abstract electrons from H(2)O, generating O(2) and a proton gradient subsequently used for ATP formation. It consists of a core antenna complex that captures photons, and an electron transfer chain that converts photonic excitation into a charge separation. The D1/D2 (PsbA/PsbD) reaction center heterodimer binds P680, the primary electron donor of PSII as well as several subsequent electron acceptors. This is Photosystem II protein D1 from Zygnema circumcarinatum (Green alga).